The following is a 615-amino-acid chain: 1-deoxy-D-xylulose-5-phosphate synthase (615 aa).

Thiamine diphosphate is bound by residues His-72 and 111–113 (GHS). Asp-142 contributes to the Mg(2+) binding site. Thiamine diphosphate is bound by residues 143–144 (GA), Asn-171, Tyr-278, and Glu-360. A Mg(2+)-binding site is contributed by Asn-171.

The protein belongs to the transketolase family. DXPS subfamily. As to quaternary structure, homodimer. Mg(2+) serves as cofactor. The cofactor is thiamine diphosphate.

The catalysed reaction is D-glyceraldehyde 3-phosphate + pyruvate + H(+) = 1-deoxy-D-xylulose 5-phosphate + CO2. It participates in metabolic intermediate biosynthesis; 1-deoxy-D-xylulose 5-phosphate biosynthesis; 1-deoxy-D-xylulose 5-phosphate from D-glyceraldehyde 3-phosphate and pyruvate: step 1/1. Its function is as follows. Catalyzes the acyloin condensation reaction between C atoms 2 and 3 of pyruvate and glyceraldehyde 3-phosphate to yield 1-deoxy-D-xylulose-5-phosphate (DXP). The protein is 1-deoxy-D-xylulose-5-phosphate synthase of Campylobacter jejuni subsp. doylei (strain ATCC BAA-1458 / RM4099 / 269.97).